The chain runs to 609 residues: DNA mismatch repair protein MutL (609 aa).

It belongs to the DNA mismatch repair MutL/HexB family.

This protein is involved in the repair of mismatches in DNA. It is required for dam-dependent methyl-directed DNA mismatch repair. May act as a 'molecular matchmaker', a protein that promotes the formation of a stable complex between two or more DNA-binding proteins in an ATP-dependent manner without itself being part of a final effector complex. In Rickettsia felis (strain ATCC VR-1525 / URRWXCal2) (Rickettsia azadi), this protein is DNA mismatch repair protein MutL.